Reading from the N-terminus, the 146-residue chain is Large ribosomal subunit protein uL15 (146 aa).

The segment covering 1-13 (MKLHELKPAEGSR) has biased composition (basic and acidic residues). The disordered stretch occupies residues 1-52 (MKLHELKPAEGSRKVRNRVGRGIGSGNGKTAGKGHKGQNARSGGGVRLGFEG). Gly residues-rich tracts occupy residues 21–31 (RGIGSGNGKTA) and 42–52 (SGGGVRLGFEG).

It belongs to the universal ribosomal protein uL15 family. In terms of assembly, part of the 50S ribosomal subunit.

Functionally, binds to the 23S rRNA. In Bacillus anthracis (strain A0248), this protein is Large ribosomal subunit protein uL15.